The following is a 188-amino-acid chain: Adenylate kinase (188 aa).

10–15 (GCGKGT) provides a ligand contact to ATP. Positions 30–59 (STGDMLRHARAAGTELGRRVAAIMDGGNLV) are NMP. Residues T31, R36, 57-59 (NLV), 85-88 (GFPR), and Q92 each bind AMP. The LID stretch occupies residues 126 to 136 (KRAEEEGRPDD). R127 is an ATP binding site. AMP contacts are provided by R133 and R144. G172 contributes to the ATP binding site.

The protein belongs to the adenylate kinase family. Monomer.

The protein localises to the cytoplasm. The enzyme catalyses AMP + ATP = 2 ADP. It participates in purine metabolism; AMP biosynthesis via salvage pathway; AMP from ADP: step 1/1. In terms of biological role, catalyzes the reversible transfer of the terminal phosphate group between ATP and AMP. Plays an important role in cellular energy homeostasis and in adenine nucleotide metabolism. This Maricaulis maris (strain MCS10) (Caulobacter maris) protein is Adenylate kinase.